The following is a 206-amino-acid chain: MSRILLITSSPRSTDSLSTRFAHDLARQLAARDAAGAVTLRDLSNDPLPHIDDAYIVGRMLPSDARSAEQAQAVELAQALVDELRAADIVVIGSAMTNFGPSTQLRAWFDRVIWPQVTFRYGESGVAGTLEGKQVYLVTASGGIFSEGPYAPFDYQSGYLKHLLGFIGMTDIREVRVEGTVLGAEAVQAAIAKAGQELQALVEQAG.

FMN-binding positions include Ser-10 and Ser-16–Ser-18.

The protein belongs to the azoreductase type 1 family. Homodimer. The cofactor is FMN.

The catalysed reaction is 2 a quinone + NADH + H(+) = 2 a 1,4-benzosemiquinone + NAD(+). It catalyses the reaction N,N-dimethyl-1,4-phenylenediamine + anthranilate + 2 NAD(+) = 2-(4-dimethylaminophenyl)diazenylbenzoate + 2 NADH + 2 H(+). Functionally, quinone reductase that provides resistance to thiol-specific stress caused by electrophilic quinones. Also exhibits azoreductase activity. Catalyzes the reductive cleavage of the azo bond in aromatic azo compounds to the corresponding amines. The protein is FMN-dependent NADH:quinone oxidoreductase 1 of Burkholderia lata (strain ATCC 17760 / DSM 23089 / LMG 22485 / NCIMB 9086 / R18194 / 383).